The following is a 145-amino-acid chain: Protein SprT-like (145 aa).

The 136-residue stretch at 5 to 140 folds into the SprT-like domain; sequence DYVREVSLAD…ACGRCHGRLI (136 aa). Residue His-64 participates in Zn(2+) binding. Residue Glu-65 is part of the active site. His-68 is a Zn(2+) binding site.

It belongs to the SprT family. Zn(2+) serves as cofactor.

Its subcellular location is the cytoplasm. The protein is Protein SprT-like of Streptococcus equi subsp. zooepidemicus (strain MGCS10565).